The following is a 523-amino-acid chain: Endoglucanase 19 (523 aa).

Positions 1–52 (MCSWSLSSHTLTSPVRQAAMEPKSSSCGGAGIRLRLLVVLHLLLLVPSSAMA) are cleaved as a signal peptide. The Nucleophile role is filled by Asp107. A glycan (N-linked (GlcNAc...) asparagine) is linked at Asn279. Active-site residues include His442, Asp493, and Glu502.

This sequence belongs to the glycosyl hydrolase 9 (cellulase E) family.

It is found in the secreted. The catalysed reaction is Endohydrolysis of (1-&gt;4)-beta-D-glucosidic linkages in cellulose, lichenin and cereal beta-D-glucans.. This chain is Endoglucanase 19, found in Oryza sativa subsp. japonica (Rice).